Here is a 254-residue protein sequence, read N- to C-terminus: Bowman-Birk type bran trypsin inhibitor (254 aa).

Positions 1-22 are cleaved as a signal peptide; sequence MSNTTMATSTILLFLLAGLAAA. Residues 23 to 118 constitute a propeptide that is removed on maturation; that stretch reads HGDGDTTIRL…KCTAALDGLS (96 aa). Repeats lie at residues 46 to 120, 121 to 187, and 188 to 251; these read KPWD…LSME, RPWK…FCTP, and RPWG…CKPR. 9 disulfide bridges follow: C125–C185, C126–C143, C152–C159, C156–C172, C193–C248, C194–C209, C199–C207, C216–C223, and C220–C236. Positions 252–254 are excised as a propeptide; the sequence is AEN.

Belongs to the Bowman-Birk serine protease inhibitor family.

This Oryza sativa subsp. japonica (Rice) protein is Bowman-Birk type bran trypsin inhibitor (RBBI3.3).